The primary structure comprises 248 residues: uncharacterized protein (248 aa).

9–33 (IITGASSGIGKATALLLAEKGAKLV) serves as a coordination point for NADP(+). Ser141 is a substrate binding site. The active-site Proton acceptor is Tyr154.

This sequence belongs to the short-chain dehydrogenases/reductases (SDR) family.

This is an uncharacterized protein from Listeria monocytogenes serovar 1/2a (strain ATCC BAA-679 / EGD-e).